The chain runs to 35 residues: Probable endonuclease 4 (35 aa).

Residue Glu-15 coordinates Zn(2+).

This sequence belongs to the AP endonuclease 2 family. It depends on Zn(2+) as a cofactor.

The enzyme catalyses Endonucleolytic cleavage to 5'-phosphooligonucleotide end-products.. In terms of biological role, endonuclease IV plays a role in DNA repair. It cleaves phosphodiester bonds at apurinic or apyrimidinic (AP) sites, generating a 3'-hydroxyl group and a 5'-terminal sugar phosphate. The sequence is that of Probable endonuclease 4 (nfo) from Yersinia enterocolitica.